Here is a 471-residue protein sequence, read N- to C-terminus: Eremophilane O-acetyltransferase prx11 (471 aa).

This sequence belongs to the fumigaclavine B O-acetyltransferase family. Monomer.

It participates in sesquiterpene biosynthesis. Its function is as follows. O-acetyltransferase; part of the gene cluster that mediates the biosynthesis of PR-toxin, a bicyclic sesquiterpene belonging to the eremophilane class and acting as a mycotoxin. The first step of the pathway is catalyzed by the aristolochene synthase which performs the cyclization of trans,trans-farnesyl diphosphate (FPP) to the bicyclic sesquiterpene aristolochene. Following the formation of aristolochene, the non-oxygenated aristolochene is converted to the trioxygenated intermediate eremofortin B, via 7-epi-neopetasone. This conversion appears to involve three enzymes, a hydroxysterol oxidase-like enzyme, the quinone-oxidase prx3 that forms the quinone-type-structure in the bicyclic nucleus of aristolochene with the C8-oxo group and the C-3 hydroxyl group, and the P450 monooxygenase prx9 that introduces the epoxide at the double bond between carbons 1 and 2. No monoxy or dioxy-intermediates have been reported to be released to the broth, so these three early oxidative reactions may be coupled together. Eremofortin B is further oxidized by another P450 monooxygenase, that introduces a second epoxide between carbons 7 and 11 prior to acetylation to eremofortin A by the acetyltransferase prx11. The second epoxidation may be performed by a second P450 monooxygenase. After the acetylation step, eremofortin A is converted to eremofortin C and then to PR-toxin. First the conversion of eremofortin A to eremofortin C proceeds by oxidation of the side chain of the molecule at C-12 and is catalyzed by the short-chain oxidoreductase prx1. The cytochrome P450 monooxygenase prx8 also plays a role in this step. The primary alcohol formed at C-12 is finally oxidized by the short-chain alcohol dehydrogenase prx4 that forms PR-toxin. This is Eremophilane O-acetyltransferase prx11 from Penicillium rubens (strain ATCC 28089 / DSM 1075 / NRRL 1951 / Wisconsin 54-1255) (Penicillium chrysogenum).